Reading from the N-terminus, the 105-residue chain is Large ribosomal subunit protein uL24 (105 aa).

Belongs to the universal ribosomal protein uL24 family. Part of the 50S ribosomal subunit.

One of two assembly initiator proteins, it binds directly to the 5'-end of the 23S rRNA, where it nucleates assembly of the 50S subunit. In terms of biological role, one of the proteins that surrounds the polypeptide exit tunnel on the outside of the subunit. The sequence is that of Large ribosomal subunit protein uL24 from Clostridium botulinum (strain ATCC 19397 / Type A).